The primary structure comprises 404 residues: S-adenosylmethionine synthase (404 aa).

Residue 139-144 participates in ATP binding; it reads GKGSTD.

It belongs to the AdoMet synthase 2 family. It depends on Mg(2+) as a cofactor.

The enzyme catalyses L-methionine + ATP + H2O = S-adenosyl-L-methionine + phosphate + diphosphate. The protein operates within amino-acid biosynthesis; S-adenosyl-L-methionine biosynthesis; S-adenosyl-L-methionine from L-methionine: step 1/1. Functionally, catalyzes the formation of S-adenosylmethionine from methionine and ATP. The sequence is that of S-adenosylmethionine synthase from Saccharolobus islandicus (strain L.S.2.15 / Lassen #1) (Sulfolobus islandicus).